A 142-amino-acid polypeptide reads, in one-letter code: MKTFTAKPETVKRDWFVVDAAGQTLGRLATEIASRLRGKHKPEYTPHVDTGDYIVVINAEQVRVTGAKASDKKYYSHSGFPGGIKEINFEKLIARAPERVIETAVKGMLPKNPLGRDMYRKLKVYKGAAHPHTAQQPQELKI.

Belongs to the universal ribosomal protein uL13 family. Part of the 50S ribosomal subunit.

In terms of biological role, this protein is one of the early assembly proteins of the 50S ribosomal subunit, although it is not seen to bind rRNA by itself. It is important during the early stages of 50S assembly. The protein is Large ribosomal subunit protein uL13 of Ectopseudomonas mendocina (strain ymp) (Pseudomonas mendocina).